Reading from the N-terminus, the 676-residue chain is MIPPHRCLTDPLLQGSWPGYLPPMPKRARRMRLTTWRSPVTAVIAALLAAFLTPAAAHGAPRESAPVYSYENAIRESVWVDTRLDGDGDGKTDRVAVDVVRPRELARQGRKIPVIMDASPYYSCCGRGNESQKKTYDANGDVVRMPLFYDNYFVPRGYAFVGVDLAGTNRSDGCVDVGGRSDIQSAKAVIDWLNGRAHGYTSRTGTARAKATWTNGRTGMIGKSWDGTVANGVAATGVKGLKTIVPISAISSWYDYYFAKGAPLYDSGPDWLSDYVDSPDARTKCAAVQRKLVDEAPRTGDWTSLWTERDYVKDASKVRASVFLVHGMQDLNVRAKNFGQWWSALAKNGVERKIWLSQTGHVDPFDFRRTAWVDTLHRWFDHELLGYDNGVDREPTADIERHPDQWVTSTLWPPRGTDAVTLRPGTGTQAGVGTLGLRTGSGTETFTDDPRLSETDWAAHIDESTASKAGFVTAPLAGDVRLSGSSKVTVTATPTTSTAHLSAVLVDLGPDTIRDYADGGEGITTLTDRTCWGASTAGDSACFKNTRATTAAVDYTVLSRGWADLGNHASARKGVPLTPGKAYTITLDLAATDHVVPKGHRLALIVAGTDKDLIDPPSSTPTLTLDLARTSARVPLVGGAAAFTRATAQSGTAADATVLDGVREPHTAHRVPGGGL.

Catalysis depends on charge relay system residues S224, D330, and H361. The tract at residues 423–450 is disordered; the sequence is RPGTGTQAGVGTLGLRTGSGTETFTDDP.

Belongs to the peptidase S15 family.

The catalysed reaction is Hydrolyzes Xaa-Pro-|- bonds to release unblocked, N-terminal dipeptides from substrates including Ala-Pro-|-p-nitroanilide and (sequentially) Tyr-Pro-|-Phe-Pro-|-Gly-Pro-|-Ile.. In Streptomyces avermitilis (strain ATCC 31267 / DSM 46492 / JCM 5070 / NBRC 14893 / NCIMB 12804 / NRRL 8165 / MA-4680), this protein is Putative Xaa-Pro dipeptidyl-peptidase.